A 639-amino-acid polypeptide reads, in one-letter code: Threonine--tRNA ligase (639 aa).

Positions 1–61 constitute a TGS domain; sequence MIRITLPDNS…DHDARLQIIT (61 aa). The tract at residues 242–533 is catalytic; the sequence is DHRRLGRELD…LIEQHAGALP (292 aa). 3 residues coordinate Zn(2+): cysteine 333, histidine 384, and histidine 510.

This sequence belongs to the class-II aminoacyl-tRNA synthetase family. In terms of assembly, homodimer. It depends on Zn(2+) as a cofactor.

Its subcellular location is the cytoplasm. The catalysed reaction is tRNA(Thr) + L-threonine + ATP = L-threonyl-tRNA(Thr) + AMP + diphosphate + H(+). In terms of biological role, catalyzes the attachment of threonine to tRNA(Thr) in a two-step reaction: L-threonine is first activated by ATP to form Thr-AMP and then transferred to the acceptor end of tRNA(Thr). Also edits incorrectly charged L-seryl-tRNA(Thr). The sequence is that of Threonine--tRNA ligase from Paracidovorax citrulli (strain AAC00-1) (Acidovorax citrulli).